Consider the following 284-residue polypeptide: Cell division protein ZipA (284 aa).

Residue Met1 is a topological domain, periplasmic. Residues Glu2–Phe22 form a helical membrane-spanning segment. At Asp23–Arg284 the chain is on the cytoplasmic side. Residues Pro47 to Pro140 are disordered. Basic and acidic residues-rich tracts occupy residues Leu62–Leu75, Arg83–Gln102, and Ser119–Pro140.

It belongs to the ZipA family. In terms of assembly, interacts with FtsZ via their C-terminal domains.

The protein resides in the cell inner membrane. Functionally, essential cell division protein that stabilizes the FtsZ protofilaments by cross-linking them and that serves as a cytoplasmic membrane anchor for the Z ring. Also required for the recruitment to the septal ring of downstream cell division proteins. The chain is Cell division protein ZipA from Pseudomonas fluorescens (strain ATCC BAA-477 / NRRL B-23932 / Pf-5).